Consider the following 427-residue polypeptide: UPF0597 protein CPF_0803 (427 aa).

It belongs to the UPF0597 family.

The protein is UPF0597 protein CPF_0803 of Clostridium perfringens (strain ATCC 13124 / DSM 756 / JCM 1290 / NCIMB 6125 / NCTC 8237 / Type A).